Consider the following 177-residue polypeptide: ATP-dependent protease subunit HslV (177 aa).

Thr-6 is an active-site residue. Na(+)-binding residues include Gly-161, Cys-164, and Thr-167.

The protein belongs to the peptidase T1B family. HslV subfamily. As to quaternary structure, a double ring-shaped homohexamer of HslV is capped on each side by a ring-shaped HslU homohexamer. The assembly of the HslU/HslV complex is dependent on binding of ATP.

The protein resides in the cytoplasm. The catalysed reaction is ATP-dependent cleavage of peptide bonds with broad specificity.. Its activity is regulated as follows. Allosterically activated by HslU binding. Its function is as follows. Protease subunit of a proteasome-like degradation complex believed to be a general protein degrading machinery. The protein is ATP-dependent protease subunit HslV of Petrotoga mobilis (strain DSM 10674 / SJ95).